The primary structure comprises 211 residues: ATP-dependent Clp protease proteolytic subunit 2 (211 aa).

Residue S106 is the Nucleophile of the active site. H131 is an active-site residue.

This sequence belongs to the peptidase S14 family. As to quaternary structure, fourteen ClpP subunits assemble into 2 heptameric rings which stack back to back to give a disk-like structure with a central cavity, resembling the structure of eukaryotic proteasomes.

Its subcellular location is the cytoplasm. The catalysed reaction is Hydrolysis of proteins to small peptides in the presence of ATP and magnesium. alpha-casein is the usual test substrate. In the absence of ATP, only oligopeptides shorter than five residues are hydrolyzed (such as succinyl-Leu-Tyr-|-NHMec, and Leu-Tyr-Leu-|-Tyr-Trp, in which cleavage of the -Tyr-|-Leu- and -Tyr-|-Trp bonds also occurs).. Its function is as follows. Cleaves peptides in various proteins in a process that requires ATP hydrolysis. Has a chymotrypsin-like activity. Plays a major role in the degradation of misfolded proteins. The sequence is that of ATP-dependent Clp protease proteolytic subunit 2 from Bradyrhizobium diazoefficiens (strain JCM 10833 / BCRC 13528 / IAM 13628 / NBRC 14792 / USDA 110).